Reading from the N-terminus, the 247-residue chain is MRWKMKARVLSNRRIASEVYEMTFEWKGKKPHPGQFLMIDCQGKTFLKRPFSVNDFEEEKMTILYQVRGEGTKNLSQMKEGDILEITGPHGNGFEILEGKRVLIVGGGVGIAPLLYLAKKVKAQKLYIALGFKRETFLVEKFEGLGEVVVTTEEGSTGRKGLVTSVVEEMIGEVDIVYGCGPKPMLKALQEISMKANVLCQISLEEKMACGIGACLGCACKVREDKGFSYKRVCRDGPVFWAEEVLF.

The FAD-binding FR-type domain occupies 2–96 (RWKMKARVLS…TGPHGNGFEI (95 aa)). FAD is bound by residues 49 to 52 (RPFS), 64 to 66 (LYQ), and 71 to 72 (GT). [2Fe-2S] cluster contacts are provided by Cys210, Cys215, Cys218, and Cys234.

It belongs to the PyrK family. Heterotetramer of 2 PyrK and 2 PyrD type B subunits. [2Fe-2S] cluster serves as cofactor. Requires FAD as cofactor.

It functions in the pathway pyrimidine metabolism; UMP biosynthesis via de novo pathway; orotate from (S)-dihydroorotate (NAD(+) route): step 1/1. Functionally, responsible for channeling the electrons from the oxidation of dihydroorotate from the FMN redox center in the PyrD type B subunit to the ultimate electron acceptor NAD(+). The polypeptide is Dihydroorotate dehydrogenase B (NAD(+)), electron transfer subunit (Caldanaerobacter subterraneus subsp. tengcongensis (strain DSM 15242 / JCM 11007 / NBRC 100824 / MB4) (Thermoanaerobacter tengcongensis)).